The chain runs to 705 residues: Probable cyclic nucleotide-gated ion channel 16 (705 aa).

The Cytoplasmic portion of the chain corresponds to 1–57 (MSNLHLYTSARFRNFPTTFSLRHHHNDPNNQRRRSIFSKLRDKTLDPGGDLITRWNH). A helical membrane pass occupies residues 58 to 78 (IFLITCLLALFLDPLYFYLPI). Residues 79–91 (VQAGTACMSIDVR) are Extracellular-facing. Residues 92 to 112 (FGIFVTCFRNLADLSFLIHIL) traverse the membrane as a helical segment. Over 113–147 (LKFKTAFVSKSSRVFGRGELVMDRREIAIRYLKSE) the chain is Cytoplasmic. A helical transmembrane segment spans residues 148-168 (FVIDLAATLPLPQIMIWFVIP). Residues 169 to 180 (NAGEFRYAAHQN) are Extracellular-facing. The chain crosses the membrane as a helical span at residues 181–201 (HTLSLIVLIQYVPRFLVMLPL). Topologically, residues 202 to 222 (NRRIIKATGVAAKTAWSGAAY) are cytoplasmic. A helical membrane pass occupies residues 223–243 (NLILYLLVSHVLGSVWYVLSI). At 244–353 (QRQHECWRRE…LAASTLSSET (110 aa)) the chain is on the extracellular side. Residues 354-374 (IFSCFICVAGLVFFSHLIGNV) form a helical membrane-spanning segment. Residues 375–705 (QNYLQSTTAR…MFKPEDPGFF (331 aa)) are Cytoplasmic-facing. A nucleoside 3',5'-cyclic phosphate-binding positions include 457 to 580 (FFAQ…HSKK) and Glu528. The calmodulin-binding stretch occupies residues 573 to 588 (FRRLHSKKLQHAFRYY). The IQ domain occupies 593-622 (RAWGTCFIQAAWRRYMKRKLAMELARQEEE). Disordered stretches follow at residues 636 to 655 (EEDM…SNNQ) and 672 to 705 (RGVL…PGFF). The segment covering 642 to 655 (SNNNNGDENSSNNQ) has biased composition (low complexity).

The protein belongs to the cyclic nucleotide-gated cation channel (TC 1.A.1.5) family. Homotetramer or heterotetramer.

It is found in the cell membrane. Its function is as follows. Putative cyclic nucleotide-gated ion channel. This chain is Probable cyclic nucleotide-gated ion channel 16 (CNGC16), found in Arabidopsis thaliana (Mouse-ear cress).